Reading from the N-terminus, the 55-residue chain is MIFYHKKYMHYCINRFLLGMEPIIPACNRRQLISHFRLIKNAIFDIFQASLLPKL.

This is an uncharacterized protein from Rickettsia prowazekii (strain Madrid E).